A 141-amino-acid polypeptide reads, in one-letter code: Transcription antitermination protein NusB (141 aa).

It belongs to the NusB family.

In terms of biological role, involved in transcription antitermination. Required for transcription of ribosomal RNA (rRNA) genes. Binds specifically to the boxA antiterminator sequence of the ribosomal RNA (rrn) operons. This Desulfotalea psychrophila (strain LSv54 / DSM 12343) protein is Transcription antitermination protein NusB.